Reading from the N-terminus, the 84-residue chain is RNA-binding protein Hfq (84 aa).

The Sm domain occupies 9 to 69 (DRFLNILRTN…VSTIMPESFV (61 aa)).

It belongs to the Hfq family. As to quaternary structure, homohexamer.

RNA chaperone that binds small regulatory RNA (sRNAs) and mRNAs to facilitate mRNA translational regulation in response to envelope stress, environmental stress and changes in metabolite concentrations. Also binds with high specificity to tRNAs. The polypeptide is RNA-binding protein Hfq (Thermosipho africanus (strain TCF52B)).